A 210-amino-acid polypeptide reads, in one-letter code: BAG family molecular chaperone regulator 1 (210 aa).

The region spanning 8 to 85 (SSVQTTIDIL…IIVMGGKNAL (78 aa)) is the Ubiquitin-like domain. Residues 108–194 (AYDLNLRDVA…TLLNQNDALL (87 aa)) enclose the BAG domain.

In terms of assembly, homodimer or homotetramer.

In terms of biological role, may inhibit the chaperone activity of HSP70/HSC70 by promoting substrate release in an ATP-dependent manner. This chain is BAG family molecular chaperone regulator 1 (bag-1), found in Caenorhabditis elegans.